Here is a 135-residue protein sequence, read N- to C-terminus: uncharacterized protein (135 aa).

Residues 68–135 (DEVDNYIRVF…KKESEDEDEL (68 aa)) adopt a coiled-coil conformation. Residues 88–135 (EKIVGKPPKSTSAPDIDELEEEPDEETEEKSEEKTEKKKKESEDEDEL) form a disordered region. The segment covering 102–117 (DIDELEEEPDEETEEK) has biased composition (acidic residues). The segment covering 118 to 129 (SEEKTEKKKKES) has biased composition (basic and acidic residues).

This is an uncharacterized protein from Acidianus hospitalis (AFV-1).